Consider the following 286-residue polypeptide: Polyamine aminopropyltransferase (286 aa).

In terms of domain architecture, PABS spans 5 to 238 (TMWHETLHDQ…GIMTFAWATD (234 aa)). Position 33 (Gln-33) interacts with S-methyl-5'-thioadenosine. The spermidine site is built by His-64 and Asp-88. S-methyl-5'-thioadenosine is bound by residues Glu-108 and 140-141 (DG). Asp-158 functions as the Proton acceptor in the catalytic mechanism. Residue 158-161 (DCTD) participates in spermidine binding. Pro-165 is a binding site for S-methyl-5'-thioadenosine.

The protein belongs to the spermidine/spermine synthase family. In terms of assembly, homodimer or homotetramer.

It localises to the cytoplasm. It catalyses the reaction S-adenosyl 3-(methylsulfanyl)propylamine + putrescine = S-methyl-5'-thioadenosine + spermidine + H(+). The protein operates within amine and polyamine biosynthesis; spermidine biosynthesis; spermidine from putrescine: step 1/1. Functionally, catalyzes the irreversible transfer of a propylamine group from the amino donor S-adenosylmethioninamine (decarboxy-AdoMet) to putrescine (1,4-diaminobutane) to yield spermidine. The protein is Polyamine aminopropyltransferase of Salmonella typhi.